Reading from the N-terminus, the 443-residue chain is Tol-Pal system protein TolB (443 aa).

The signal sequence occupies residues 1 to 33; the sequence is MKIGIINTKIRTVFSAFACMIAASLVCTMPARA.

It belongs to the TolB family. The Tol-Pal system is composed of five core proteins: the inner membrane proteins TolA, TolQ and TolR, the periplasmic protein TolB and the outer membrane protein Pal. They form a network linking the inner and outer membranes and the peptidoglycan layer.

Its subcellular location is the periplasm. Its function is as follows. Part of the Tol-Pal system, which plays a role in outer membrane invagination during cell division and is important for maintaining outer membrane integrity. The protein is Tol-Pal system protein TolB of Brucella abortus (strain S19).